The following is a 473-amino-acid chain: Photosystem II CP43 reaction center protein (473 aa).

Residues 1 to 14 constitute a propeptide that is removed on maturation; sequence MKTLYSLRRFSHVE. At Thr15 the chain carries N-acetylthreonine. Thr15 carries the post-translational modification Phosphothreonine. 5 helical membrane-spanning segments follow: residues 69 to 93, 134 to 155, 178 to 200, 255 to 275, and 291 to 312; these read LFEVAHFGPEKPMYEQGLILLPHLA, LLGPEIIEESFPLFRYVWKDRN, KALYFGGVYDTWAPGGGDVRKIT, KPFAWARRALVWSGEAYLSYS, and WFNNTAYPSEFYGPTGPEASQA. A [CaMn4O5] cluster-binding site is contributed by Glu367. A helical transmembrane segment spans residues 447-471; it reads RARAAAAGFEKGIDRDFEPVLSMTP.

The protein belongs to the PsbB/PsbC family. PsbC subfamily. PSII is composed of 1 copy each of membrane proteins PsbA, PsbB, PsbC, PsbD, PsbE, PsbF, PsbH, PsbI, PsbJ, PsbK, PsbL, PsbM, PsbT, PsbX, PsbY, PsbZ, Psb30/Ycf12, at least 3 peripheral proteins of the oxygen-evolving complex and a large number of cofactors. It forms dimeric complexes. Binds multiple chlorophylls and provides some of the ligands for the Ca-4Mn-5O cluster of the oxygen-evolving complex. It may also provide a ligand for a Cl- that is required for oxygen evolution. PSII binds additional chlorophylls, carotenoids and specific lipids. serves as cofactor.

The protein resides in the plastid membrane. Its function is as follows. One of the components of the core complex of photosystem II (PSII). It binds chlorophyll and helps catalyze the primary light-induced photochemical processes of PSII. PSII is a light-driven water:plastoquinone oxidoreductase, using light energy to abstract electrons from H(2)O, generating O(2) and a proton gradient subsequently used for ATP formation. The polypeptide is Photosystem II CP43 reaction center protein (Cuscuta gronovii (Common dodder)).